The chain runs to 431 residues: Light-independent protochlorophyllide reductase subunit N (431 aa).

The [4Fe-4S] cluster site is built by cysteine 29, cysteine 54, and cysteine 114.

This sequence belongs to the BchN/ChlN family. As to quaternary structure, protochlorophyllide reductase is composed of three subunits; ChlL, ChlN and ChlB. Forms a heterotetramer of two ChlB and two ChlN subunits. It depends on [4Fe-4S] cluster as a cofactor.

It localises to the plastid. The protein localises to the chloroplast. The catalysed reaction is chlorophyllide a + oxidized 2[4Fe-4S]-[ferredoxin] + 2 ADP + 2 phosphate = protochlorophyllide a + reduced 2[4Fe-4S]-[ferredoxin] + 2 ATP + 2 H2O. It functions in the pathway porphyrin-containing compound metabolism; chlorophyll biosynthesis (light-independent). In terms of biological role, component of the dark-operative protochlorophyllide reductase (DPOR) that uses Mg-ATP and reduced ferredoxin to reduce ring D of protochlorophyllide (Pchlide) to form chlorophyllide a (Chlide). This reaction is light-independent. The NB-protein (ChlN-ChlB) is the catalytic component of the complex. This is Light-independent protochlorophyllide reductase subunit N from Nephroselmis olivacea (Green alga).